The chain runs to 264 residues: Thymidylate synthase (264 aa).

Residue arginine 21 participates in dUMP binding. Histidine 51 serves as a coordination point for (6R)-5,10-methylene-5,6,7,8-tetrahydrofolate. 126–127 (RR) contributes to the dUMP binding site. Cysteine 146 functions as the Nucleophile in the catalytic mechanism. DUMP contacts are provided by residues 166–169 (RSCD), asparagine 177, and 207–209 (HLY). Position 169 (aspartate 169) interacts with (6R)-5,10-methylene-5,6,7,8-tetrahydrofolate. Alanine 263 lines the (6R)-5,10-methylene-5,6,7,8-tetrahydrofolate pocket.

This sequence belongs to the thymidylate synthase family. Bacterial-type ThyA subfamily. Homodimer.

It localises to the cytoplasm. It catalyses the reaction dUMP + (6R)-5,10-methylene-5,6,7,8-tetrahydrofolate = 7,8-dihydrofolate + dTMP. It functions in the pathway pyrimidine metabolism; dTTP biosynthesis. Functionally, catalyzes the reductive methylation of 2'-deoxyuridine-5'-monophosphate (dUMP) to 2'-deoxythymidine-5'-monophosphate (dTMP) while utilizing 5,10-methylenetetrahydrofolate (mTHF) as the methyl donor and reductant in the reaction, yielding dihydrofolate (DHF) as a by-product. This enzymatic reaction provides an intracellular de novo source of dTMP, an essential precursor for DNA biosynthesis. The protein is Thymidylate synthase of Serratia proteamaculans (strain 568).